A 63-amino-acid polypeptide reads, in one-letter code: Hirudin (63 aa).

The interval 1 to 3 is interaction with thrombin active site; it reads VVY. Intrachain disulfides connect Cys-6–Cys-14, Cys-16–Cys-28, and Cys-22–Cys-39. The interval 39 to 63 is disordered; sequence CVTGEGTPGPQSHNDGDFEEPEEYL. Residue Thr-45 is glycosylated (O-linked (GalNAc...) threonine). An interaction with fibrinogen-binding exosite of thrombin region spans residues 55–63; the sequence is DFEEPEEYL. Sulfotyrosine is present on Tyr-62.

It belongs to the protease inhibitor I14 (hirudin) family.

The protein resides in the secreted. Its function is as follows. Hirudin is a potent thrombin-specific protease inhibitor. It forms a stable non-covalent complex with alpha-thrombin, thereby abolishing its ability to cleave fibrinogen. This Poecilobdella viridis (Indian freshwater leech) protein is Hirudin.